The following is an 843-amino-acid chain: DNA gyrase subunit A (843 aa).

Residues Leu-61–Leu-528 enclose the Topo IIA-type catalytic domain. The O-(5'-phospho-DNA)-tyrosine intermediate role is filled by Tyr-149. A GyrA-box motif is present at residues Gln-555–Gly-561.

It belongs to the type II topoisomerase GyrA/ParC subunit family. In terms of assembly, heterotetramer, composed of two GyrA and two GyrB chains. In the heterotetramer, GyrA contains the active site tyrosine that forms a transient covalent intermediate with DNA, while GyrB binds cofactors and catalyzes ATP hydrolysis.

Its subcellular location is the cytoplasm. It carries out the reaction ATP-dependent breakage, passage and rejoining of double-stranded DNA.. Functionally, a type II topoisomerase that negatively supercoils closed circular double-stranded (ds) DNA in an ATP-dependent manner to modulate DNA topology and maintain chromosomes in an underwound state. Negative supercoiling favors strand separation, and DNA replication, transcription, recombination and repair, all of which involve strand separation. Also able to catalyze the interconversion of other topological isomers of dsDNA rings, including catenanes and knotted rings. Type II topoisomerases break and join 2 DNA strands simultaneously in an ATP-dependent manner. This Leptospira biflexa serovar Patoc (strain Patoc 1 / Ames) protein is DNA gyrase subunit A.